The primary structure comprises 280 residues: Urease accessory protein UreD (280 aa).

It belongs to the UreD family. UreD, UreF and UreG form a complex that acts as a GTP-hydrolysis-dependent molecular chaperone, activating the urease apoprotein by helping to assemble the nickel containing metallocenter of UreC. The UreE protein probably delivers the nickel.

The protein localises to the cytoplasm. Required for maturation of urease via the functional incorporation of the urease nickel metallocenter. The chain is Urease accessory protein UreD from Pseudomonas aeruginosa (strain UCBPP-PA14).